Consider the following 94-residue polypeptide: Beta-defensin 132 (94 aa).

Residues Met-1–Ala-22 form the signal peptide. 2 cysteine pairs are disulfide-bonded: Cys-27/Cys-55 and Cys-39/Cys-56. The interval Gly-72–Ser-94 is disordered. Positions Gln-76–Lys-86 are enriched in basic residues.

The protein belongs to the beta-defensin family.

Its subcellular location is the secreted. In terms of biological role, has antibacterial activity. This chain is Beta-defensin 132 (DEFB132), found in Gorilla gorilla gorilla (Western lowland gorilla).